Consider the following 270-residue polypeptide: Putative methylsterol monooxygenase DDB_G0269788 (270 aa).

3 consecutive transmembrane segments (helical) span residues 31–51, 82–102, and 110–130; these read FIAH…CDFM, IFVQ…IGLS, and IPYL…YFYW. The Fatty acid hydroxylase domain maps to 118–249; it reads ACCFLIEDFY…FTYLDKIFGT (132 aa). The Histidine box-1 motif lies at 132–136; the sequence is HRALH. The short motif at 145 to 149 is the Histidine box-2 element; that stretch reads HKVHH. Positions 224–230 match the Histidine box-3 motif; sequence FHDFHHE.

Belongs to the sterol desaturase family. It depends on Fe cation as a cofactor.

It localises to the endoplasmic reticulum membrane. It carries out the reaction 4,4-dimethyl-5alpha-cholest-7-en-3beta-ol + 6 Fe(II)-[cytochrome b5] + 3 O2 + 5 H(+) = 4alpha-carboxy-4beta-methyl-5alpha-cholest-7-ene-3beta-ol + 6 Fe(III)-[cytochrome b5] + 4 H2O. It functions in the pathway steroid biosynthesis; zymosterol biosynthesis; zymosterol from lanosterol: step 3/6. The sequence is that of Putative methylsterol monooxygenase DDB_G0269788 from Dictyostelium discoideum (Social amoeba).